The chain runs to 202 residues: Keratin-associated protein 5-10 (202 aa).

7 repeat units span residues 48-51 (CCKP), 54-57 (CCVP), 144-147 (CCKP), 162-165 (CCNP), 172-175 (CCVP), 182-185 (CCKP), and 192-195 (CCVP). The 7 X 4 AA repeats of C-C-X-P stretch occupies residues 48–195 (CCKPVCCCVP…CCCQSSCCVP (148 aa)).

It belongs to the KRTAP type 5 family. Interacts with hair keratins. In terms of tissue distribution, expressed in hair root but not in skin. Expressed also in brain and skeletal muscle.

Functionally, in the hair cortex, hair keratin intermediate filaments are embedded in an interfilamentous matrix, consisting of hair keratin-associated protein (KRTAP), which are essential for the formation of a rigid and resistant hair shaft through their extensive disulfide bond cross-linking with abundant cysteine residues of hair keratins. The matrix proteins include the high-sulfur and high-glycine-tyrosine keratins. The sequence is that of Keratin-associated protein 5-10 (KRTAP5-10) from Homo sapiens (Human).